A 143-amino-acid polypeptide reads, in one-letter code: MGLSPQLAAVLLCLLVCTGNYARRQDREAGLREIIHNLDQVLKKETPCTEMFVPDVLIATKNTTEKGLLCRATRVLRKFYFPREVTPCLKNNSGVLSILRKLCRSISTLHPQESCSVSTPTLTTLNDFLGRLRGIMQMKNWQG.

The signal sequence occupies residues Met-1–Gly-19. Cystine bridges form between Cys-48–Cys-88 and Cys-70–Cys-115. N-linked (GlcNAc...) asparagine glycosylation is found at Asn-62 and Asn-91.

It belongs to the IL-4/IL-13 family.

Its subcellular location is the secreted. In terms of biological role, participates in at least several B-cell activation processes as well as of other cell types. It is a costimulator of DNA-synthesis. It induces the expression of class II MHC molecules on resting B-cells. It enhances both secretion and cell surface expression of IgE and IgG1. It also regulates the expression of the low affinity Fc receptor for IgE (CD23) on both lymphocytes and monocytes. Positively regulates IL31RA expression in macrophages. Stimulates autophagy in dendritic cells by interfering with mTORC1 signaling and through the induction of RUFY4. The protein is Interleukin-4 (IL4) of Meriones unguiculatus (Mongolian jird).